Consider the following 122-residue polypeptide: Ribosome-binding factor A (122 aa).

This sequence belongs to the RbfA family. In terms of assembly, monomer. Binds 30S ribosomal subunits, but not 50S ribosomal subunits or 70S ribosomes.

The protein localises to the cytoplasm. One of several proteins that assist in the late maturation steps of the functional core of the 30S ribosomal subunit. Associates with free 30S ribosomal subunits (but not with 30S subunits that are part of 70S ribosomes or polysomes). Required for efficient processing of 16S rRNA. May interact with the 5'-terminal helix region of 16S rRNA. The chain is Ribosome-binding factor A from Burkholderia mallei (strain NCTC 10229).